A 1351-amino-acid polypeptide reads, in one-letter code: Transcriptional regulator ovo (1351 aa).

The required for Ubr3 binding and tal-dependent proteolytic processing stretch occupies residues 1–31 (MPKIFLIKNRLHQQQQRLLESQNLLQHKNQD). Disordered stretches follow at residues 22–77 (QNLL…SDQQ), 100–119 (LDHL…NPNQ), 184–397 (NSPI…SDEE), 447–554 (AGHG…HFNA), 640–665 (SNSK…GQTS), 778–807 (DDEE…PVEQ), 834–887 (GSNQ…YQHA), 916–1000 (LLSQ…PSPT), 1023–1044 (PMSS…GSSN), and 1113–1192 (SKHG…DSSS). Residues 49-60 (SPTPTSQPPPEP) are compositionally biased toward pro residues. Composition is skewed to low complexity over residues 61–72 (QGQGQQVLGQVP) and 104–119 (NQNQ…NPNQ). Residues 205 to 232 (EKEKPAEREREKSDERTEQVEKEERVER) are compositionally biased toward basic and acidic residues. Residues 233–242 (EEEEDDEVDV) show a composition bias toward acidic residues. Over residues 262 to 272 (QRKEYPQEPKD) the composition is skewed to basic and acidic residues. Residues 324-340 (TPPPADQRPSPPPPRDP) show a composition bias toward pro residues. The segment covering 447–486 (AGHGRNSSSSSGAAGQGFQSSGFGSQNSGSGSSSGNQNAG) has biased composition (low complexity). A compositionally biased stretch (gly residues) spans 487 to 505 (SGAGSPGSGAGGGGGMGGG). Residues 530–552 (KSGQQSTASNNTGQSPGANHSHF) show a composition bias toward polar residues. The span at 644 to 653 (FHNHHHHHQH) shows a compositional bias: basic residues. Over residues 793–807 (STPSLTPDSVTPVEQ) the composition is skewed to polar residues. 5 stretches are compositionally biased toward low complexity: residues 835-878 (SNQQ…HVQQ), 916-962 (LLSQ…QQQQ), 970-979 (QQQQQPQPQS), 1025-1044 (SSSS…GSSN), and 1121-1175 (HQQQ…HGSA). 4 C2H2-type zinc fingers span residues 1197 to 1219 (FVCR…MKCH), 1225 to 1247 (YLCT…TRTH), 1253 to 1276 (YKCN…QKVH), and 1292 to 1315 (YVCE…KNNH).

As to quaternary structure, interacts (via N-terminus) with Ubr3; the interaction is mediated by tal. N-terminus is proteolytically cleaved and ubiquitinated via a tal-dependent mechanism, leading to the proteolytic degradation of the N-terminus and the production of transcriptional activator shavenbaby, a truncated form with transcriptional activator activity.

The protein localises to the cytoplasm. The protein resides in the nucleus. It is found in the nucleoplasm. Functionally, transcriptional regulator with essential functions in the germline and soma. Plays an essential role in regulating the formation of apical cell extensions such as denticles and aristae, and initiating cytoskeletal remodeling during epidermal differentiation. Its function is as follows. Transcriptional repressor which functions in postembryonic development. The full-length unprocessed form acts as a transcriptional repressor (Transcriptional repressor svb). Transcriptional activator which initiates trichome development and also promotes tarsal joint development. Has an essential somatic role regulating the tal-dependent formation of trichomes, and initiating cytoskeletal remodeling during epidermal differentiation. Function with SoxN is required for correct denticle morphogenesis on the embryonic epidermis. SoxN and svb appear to act both independently and in conjunction with each other to activate certain genes involved in denticle morphogenesis; Svb appears to be involved in regulating denticle length whereas SoxN regulates the denticle base circumference. Also functions in the development of other apical cell extensions such as bristles. Also has an important role in tarsal joint development, repressing expression of the N ligand Dl and defining its signaling boundary. In terms of biological role, transcriptional repressor which is specifically involved in female germline development, where it functions antagonistically to isoform D. Negatively regulates expression of otu and may also have autoregulatory activity. Negatively regulates expression of piwi in the primordial germ cells (PGCs). Functionally, transcriptional activator which is specifically involved in female germline development, where it functions antagonistically to isoform C. Necessary and sufficient for normal oogenesis. Required in the primordial germ cells (PGCs) for normal development of male and female germline cells. Plays a role in germline sex determination. Binds the promoter DNA and positively regulates the transcription of the otu gene in a stage-specific manner. May have autoregulatory activity. The protein is Transcriptional regulator ovo of Drosophila melanogaster (Fruit fly).